Here is a 152-residue protein sequence, read N- to C-terminus: Transcriptional regulator MraZ (152 aa).

SpoVT-AbrB domains follow at residues 5-52 and 81-124; these read ATLV…PLPE and ASEC…DETT.

Belongs to the MraZ family. In terms of assembly, forms oligomers.

It is found in the cytoplasm. It localises to the nucleoid. Its function is as follows. Negatively regulates its own expression and that of the subsequent genes in the proximal part of the division and cell wall (dcw) gene cluster. Acts by binding directly to DNA. May also regulate the expression of genes outside the dcw cluster. This chain is Transcriptional regulator MraZ, found in Escherichia coli O127:H6 (strain E2348/69 / EPEC).